The following is a 245-amino-acid chain: Purine nucleoside phosphorylase (245 aa).

Position 8 (His-8) interacts with a purine D-ribonucleoside. Phosphate-binding positions include 24 to 28 (GDPGR), Arg-46, and 89 to 92 (RAGS). 184-185 (ME) lines the a purine D-ribonucleoside pocket. Asp-207 serves as the catalytic Proton donor.

This sequence belongs to the PNP/MTAP phosphorylase family. Homohexamer; trimer of homodimers.

It carries out the reaction inosine + phosphate = alpha-D-ribose 1-phosphate + hypoxanthine. The catalysed reaction is guanosine + phosphate = alpha-D-ribose 1-phosphate + guanine. The enzyme catalyses 2'-deoxyguanosine + phosphate = 2-deoxy-alpha-D-ribose 1-phosphate + guanine. It catalyses the reaction 2'-deoxyinosine + phosphate = 2-deoxy-alpha-D-ribose 1-phosphate + hypoxanthine. The protein operates within purine metabolism; purine nucleoside salvage. Functionally, as part of the purine salvage pathway, catalyzes the phosphorolytic breakdown of the N-glycosidic bond in the beta-(deoxy)ribonucleoside molecules, with the formation of the corresponding free purine bases and pentose-1-phosphate. Preferentially acts on inosine and guanosine, and to a lesser extent on 2'-deoxyinosine and 2'-deoxyguanosine. In Plasmodium vivax (strain Salvador I), this protein is Purine nucleoside phosphorylase.